A 476-amino-acid chain; its full sequence is Ribulose bisphosphate carboxylase large chain (476 aa).

2 residues coordinate substrate: N124 and T174. Catalysis depends on K176, which acts as the Proton acceptor. Position 178 (K178) interacts with substrate. Positions 202, 204, and 205 each coordinate Mg(2+). Position 202 is an N6-carboxylysine (K202). The Proton acceptor role is filled by H295. 3 residues coordinate substrate: R296, H328, and S380.

It belongs to the RuBisCO large chain family. Type I subfamily. As to quaternary structure, heterohexadecamer of 8 large chains and 8 small chains; disulfide-linked. The disulfide link is formed within the large subunit homodimers. Requires Mg(2+) as cofactor. In terms of processing, the disulfide bond which can form in the large chain dimeric partners within the hexadecamer appears to be associated with oxidative stress and protein turnover.

Its subcellular location is the carboxysome. It catalyses the reaction 2 (2R)-3-phosphoglycerate + 2 H(+) = D-ribulose 1,5-bisphosphate + CO2 + H2O. It carries out the reaction D-ribulose 1,5-bisphosphate + O2 = 2-phosphoglycolate + (2R)-3-phosphoglycerate + 2 H(+). Its function is as follows. RuBisCO catalyzes two reactions: the carboxylation of D-ribulose 1,5-bisphosphate, the primary event in carbon dioxide fixation, as well as the oxidative fragmentation of the pentose substrate in the photorespiration process. Both reactions occur simultaneously and in competition at the same active site. This chain is Ribulose bisphosphate carboxylase large chain, found in Acaryochloris marina (strain MBIC 11017).